The following is a 968-amino-acid chain: Bifunctional glyoxylate cycle protein (968 aa).

The isocitrate lyase stretch occupies residues 1-443; sequence MSSAAKNFYQ…AVASQDEEIL (443 aa). The malate synthase stretch occupies residues 444–968; it reads SLTAQNVAGD…AYDRLVSEGY (525 aa). Arginine 601 serves as the catalytic Proton acceptor. Aspartate 881 acts as the Proton donor in catalysis.

The protein in the N-terminal section; belongs to the isocitrate lyase/PEP mutase superfamily. Isocitrate lyase family. This sequence in the C-terminal section; belongs to the malate synthase family. Intestinal and body wall muscle cells.

It catalyses the reaction D-threo-isocitrate = glyoxylate + succinate. It carries out the reaction glyoxylate + acetyl-CoA + H2O = (S)-malate + CoA + H(+). It functions in the pathway carbohydrate metabolism; glyoxylate cycle; (S)-malate from isocitrate: step 1/2. It participates in carbohydrate metabolism; glyoxylate cycle; (S)-malate from isocitrate: step 2/2. The chain is Bifunctional glyoxylate cycle protein (icl-1) from Caenorhabditis elegans.